The sequence spans 245 residues: Dehydrogenase/reductase SDR family member 6 (245 aa).

NAD(+) is bound by residues 16-18 (QGI), Asp-37, and Asp-58. Residue Arg-144 participates in substrate binding. The active-site Proton acceptor is Tyr-147. NAD(+)-binding positions include Lys-151 and 180–184 (VDTPS). Substrate is bound by residues Arg-188 and Arg-205.

It belongs to the short-chain dehydrogenases/reductases (SDR) family. In terms of assembly, homotetramer.

It is found in the cytoplasm. It carries out the reaction cis-4-hydroxy-L-proline + NAD(+) = 4-oxo-L-proline + NADH + H(+). It catalyses the reaction (R)-3-hydroxybutanoate + NAD(+) = acetoacetate + NADH + H(+). The protein operates within amino-acid metabolism. Its pathway is siderophore biosynthesis. NAD(H)-dependent dehydrogenase/reductase with a preference for cyclic substrates. Catalyzes stereoselective conversion of 4-oxo-L-proline to cis-4-hydroxy-L-proline, likely a detoxification mechanism for ketoprolines. Mediates the formation of 2,5-dihydroxybenzoate (2,5-DHBA), a siderophore that chelates free cytoplasmic iron, thereby regulating iron transport and homeostasis while protecting cells against free radical-induced oxidative stress. The iron-siderophore complex is imported into mitochondria, providing an iron source for mitochondrial metabolic processes in particular heme synthesis. May act as a 3-hydroxybutyrate dehydrogenase. The polypeptide is Dehydrogenase/reductase SDR family member 6 (bdh2) (Aquarana catesbeiana (American bullfrog)).